The primary structure comprises 253 residues: Short-chain dehydrogenase/reductase ATR9 (253 aa).

8 residues coordinate NADP(+): serine 15, serine 16, isoleucine 18, serine 38, asparagine 39, arginine 42, aspartate 65, and lysine 129. Residue serine 147 is the Proton donor of the active site. NADP(+) is bound at residue threonine 194.

The protein belongs to the short-chain dehydrogenases/reductases (SDR) family.

Its pathway is mycotoxin biosynthesis. Functionally, short-chain dehydrogenase/reductase; part of the core atranone cluster (CAC) which products are predicted to catalyze most or all steps of mycotoxin atranone synthesis, starting from geranylgeranyl pyrophosphate (GGPP). The initial cyclization of GGPP to dolabellane is probably performed by the terpene cyclase ATR13. The Baeyer-Villiger oxidation near the end of the atranone synthesis, which converts atranones D and E to atranones F and G is predicted to be catalyzed by the monooxygenase ATR8. Of the CAC's other predicted gene products, the reducing PKS ATR6 might synthesize a polyketide chain. This polyketide is probably transferred onto the atranone backbone by the polyketide transferase ATR5. Other predicted CAC products include 4 oxygenases (ATR2, ATR3, ATR4, and ATR14), 3 short-chain reductases (ATR7, ATR9, and ATR10), and a methyltransferase (ATR12). These may all be involved in the various steps of atranone biosynthesis, although their specific roles must await experimental determination. The sequence is that of Short-chain dehydrogenase/reductase ATR9 from Stachybotrys chlorohalonatus (strain IBT 40285).